The primary structure comprises 434 residues: Probable G-protein coupled receptor B0563.6 (434 aa).

N12 carries N-linked (GlcNAc...) asparagine glycosylation. A run of 2 helical transmembrane segments spans residues 30-50 and 65-85; these read VLPC…MVLA and LAVA…TEYL. Residue N88 is glycosylated (N-linked (GlcNAc...) asparagine). The next 2 membrane-spanning stretches (helical) occupy residues 105–125 and 147–167; these read LMLT…VALS and ATRA…PYAI. Residue N181 is glycosylated (N-linked (GlcNAc...) asparagine). Transmembrane regions (helical) follow at residues 208–228 and 258–278; these read ILRF…MIAF and GGTV…LLLI. N429 and N430 each carry an N-linked (GlcNAc...) asparagine glycan.

The protein belongs to the G-protein coupled receptor 1 family.

Its subcellular location is the cell membrane. Its function is as follows. Not known. Putative receptor. This Caenorhabditis elegans protein is Probable G-protein coupled receptor B0563.6.